Here is a 349-residue protein sequence, read N- to C-terminus: Fructose-1,6-bisphosphatase class 1 (349 aa).

The Mg(2+) site is built by glutamate 91, aspartate 110, leucine 112, and aspartate 113. Substrate-binding positions include 113–116 (DGSS) and asparagine 205. Position 277 (glutamate 277) interacts with Mg(2+).

The protein belongs to the FBPase class 1 family. In terms of assembly, homotetramer. It depends on Mg(2+) as a cofactor.

It is found in the cytoplasm. The enzyme catalyses beta-D-fructose 1,6-bisphosphate + H2O = beta-D-fructose 6-phosphate + phosphate. The protein operates within carbohydrate biosynthesis; gluconeogenesis. The sequence is that of Fructose-1,6-bisphosphatase class 1 from Sinorhizobium medicae (strain WSM419) (Ensifer medicae).